We begin with the raw amino-acid sequence, 293 residues long: tRNA pseudouridine synthase B (293 aa).

Aspartate 39 (nucleophile) is an active-site residue.

This sequence belongs to the pseudouridine synthase TruB family. Type 1 subfamily.

It carries out the reaction uridine(55) in tRNA = pseudouridine(55) in tRNA. Its function is as follows. Responsible for synthesis of pseudouridine from uracil-55 in the psi GC loop of transfer RNAs. This chain is tRNA pseudouridine synthase B, found in Streptococcus thermophilus (strain CNRZ 1066).